The primary structure comprises 185 residues: Ribosome-recycling factor (185 aa).

The protein belongs to the RRF family.

The protein localises to the cytoplasm. Its function is as follows. Responsible for the release of ribosomes from messenger RNA at the termination of protein biosynthesis. May increase the efficiency of translation by recycling ribosomes from one round of translation to another. This Laribacter hongkongensis (strain HLHK9) protein is Ribosome-recycling factor.